Here is a 119-residue protein sequence, read N- to C-terminus: Ribonuclease P protein component (119 aa).

Belongs to the RnpA family. In terms of assembly, consists of a catalytic RNA component (M1 or rnpB) and a protein subunit.

It carries out the reaction Endonucleolytic cleavage of RNA, removing 5'-extranucleotides from tRNA precursor.. RNaseP catalyzes the removal of the 5'-leader sequence from pre-tRNA to produce the mature 5'-terminus. It can also cleave other RNA substrates such as 4.5S RNA. The protein component plays an auxiliary but essential role in vivo by binding to the 5'-leader sequence and broadening the substrate specificity of the ribozyme. The polypeptide is Ribonuclease P protein component (Syntrophomonas wolfei subsp. wolfei (strain DSM 2245B / Goettingen)).